The chain runs to 589 residues: Probable ATP-dependent RNA helicase DDX59 (589 aa).

Disordered stretches follow at residues 1–36 (MFVPRSLKLKRNSNDDLKSCEAKKSKPEAAGLQLEG) and 48–98 (KEAV…SKTQ). Residues 12–27 (NSNDDLKSCEAKKSKP) show a composition bias toward basic and acidic residues. K26 is covalently cross-linked (Glycyl lysine isopeptide (Lys-Gly) (interchain with G-Cter in SUMO2)). S64 bears the Phosphoserine mark. Basic and acidic residues predominate over residues 80–91 (GVKDSHPSEEPV). Residues 104-133 (GEPVCVVCGRYGEYICDKTDEDVCSLECKA) form an HIT-type zinc finger. 2 positions are modified to phosphoserine: S156 and S160. Positions 203–231 (IDFEHCGFPETLNQNLKKSGYEVPTPIQM) match the Q motif motif. One can recognise a Helicase ATP-binding domain in the interval 234–375 (IPVGLLGRDI…DQLLHNPVRI (142 aa)). 247-254 (ADTGSGKT) is an ATP binding site. The short motif at 323-326 (VKAD) is the DEAD box element. One can recognise a Helicase C-terminal domain in the interval 399-549 (KKKKLFEILN…ILPPQLLNSP (151 aa)).

Belongs to the DEAD box helicase family. DDX59 subfamily. As to quaternary structure, interacts (via HIT-type zinc finger) with the RUVBL1/RUVBL2 complex in the presence of ADP.

Its subcellular location is the cytoplasm. It is found in the nucleus. It catalyses the reaction ATP + H2O = ADP + phosphate + H(+). The polypeptide is Probable ATP-dependent RNA helicase DDX59 (Ddx59) (Rattus norvegicus (Rat)).